The chain runs to 378 residues: MGAAVTLNRIKIAPGIADIRDKYMELGFNYPEYNRAVKFAEESYTYYYETSPGEIKPKFCLIDGMSIDHCSSFIVPEFAKQYVLIHGEPCSSFKFRPGSLIYYQNEVTPEYIKDLKHATDYIASGQRCHFIKKDYLLGDSDSVAKCCSKTNTKHCPKIFNNNYKTEHCDDFMTGFCRNDPGNPNCLEWLRAKRKPAMSTYSDICSKHMDARYCSEFIRIIRPDYFTFGDTALYVFCNDHKGNRNCWCANYPKSNSGDKYLGPRVCWLHECTDESRDRKWLYYNQDVQRTRCKYVGCTINVNSLALKNSQAELTSNCTRTTSAVGDVHHPGEPVVKDKIKLPTWLGAAITLVVISVIFYFISIYSRPKIKTNDINVRRR.

G2 is lipidated: N-myristoyl glycine; by host. At 2–342 the chain is on the virion surface side; that stretch reads GAAVTLNRIK…VVKDKIKLPT (341 aa). The chain crosses the membrane as a helical; Signal-anchor for type II membrane protein span at residues 343 to 363; the sequence is WLGAAITLVVISVIFYFISIY. Over 364 to 378 the chain is Intravirion; it reads SRPKIKTNDINVRRR.

It belongs to the poxviridae A16/G9/J5 family. In terms of assembly, part of a stable entry-fusion complex (EFC) which is at least composed of proteins A16, A21, A28, G3, G9, H2, J5, and L5. Formation of the viral membrane is necessary for the assembly of the complex. Interacts with G9. Most cysteines are linked by disulfide bonds. They are created by the viral disulfide bond formation pathway, a poxvirus-specific redox pathway that operates on the cytoplasmic side of the MV membranes.

It localises to the virion membrane. Its function is as follows. Envelope protein part of the entry-fusion complex responsible for the virus membrane fusion with host cell membrane during virus entry. Also plays a role in cell-cell fusion (syncytium formation). This chain is Virion membrane protein A16, found in Oryctolagus cuniculus (Rabbit).